Reading from the N-terminus, the 246-residue chain is Dolichol-phosphate mannosyltransferase subunit 1 (246 aa).

Positions 20, 22, 24, 49, 51, 104, 105, 106, 133, 220, and 226 each coordinate GDP-alpha-D-mannose. A Mg(2+)-binding site is contributed by D106. D106 is a binding site for Mn(2+).

The protein belongs to the glycosyltransferase 2 family. Component of the dolichol-phosphate mannose (DPM) synthase complex composed of DPMS1, DPMS2 and DPMS3; in the complex interacts directly with DPMS3. Mg(2+) serves as cofactor. Mn(2+) is required as a cofactor. The cofactor is Ca(2+).

Its subcellular location is the endoplasmic reticulum membrane. It carries out the reaction a di-trans,poly-cis-dolichyl phosphate + GDP-alpha-D-mannose = a di-trans,poly-cis-dolichyl beta-D-mannosyl phosphate + GDP. It participates in protein modification; protein glycosylation. In terms of biological role, transfers mannose from GDP-mannose to dolichol monophosphate to form dolichol phosphate mannose (Dol-P-Man) which is the mannosyl donor in pathways leading to N-glycosylation, glycosyl phosphatidylinositol membrane anchoring, and O-mannosylation of proteins; catalytic subunit of the dolichol-phosphate mannose (DPM) synthase complex. Plays a role in plant development and physiology, sensitivity to ammonium stress and endoplasmic reticulum stress response. In Arabidopsis thaliana (Mouse-ear cress), this protein is Dolichol-phosphate mannosyltransferase subunit 1.